A 339-amino-acid polypeptide reads, in one-letter code: Transcription factor IIIA (339 aa).

9 C2H2-type zinc fingers span residues 13–37 (YICS…LCKH), 43–67 (FPCK…SITH), 73–98 (FKCD…NRFH), 105–129 (YVCH…QFTH), 135–159 (YKCP…EKVH), 162–188 (YPCK…KECH), 192–214 (VMCD…KKTH), 221–246 (YCCP…QSFH), and 252–276 (FACE…SVVH). 2 stretches are compositionally biased toward basic and acidic residues: residues 275 to 288 (VHDP…EKCP) and 305 to 316 (KSKEKSAAKATE). The interval 275 to 339 (VHDPEKRKLK…ETKGSLVIEK (65 aa)) is disordered.

Synthesized in oocytes and, in much lower levels, in somatic cells.

It is found in the nucleus. Its function is as follows. Involved in ribosomal large subunit biogenesis. Interacts with the internal control region (ICR) of approximately 50 bases within the 5S RNA genes, is required for correct transcription of these genes by RNA polymerase III. Also binds the transcribed 5S RNA's. The chain is Transcription factor IIIA (gtf3a) from Xenopus borealis (Kenyan clawed frog).